The following is a 234-amino-acid chain: Synaptogyrin-4 (234 aa).

Positions 18–169 constitute an MARVEL domain; the sequence is FLKRPKAITR…QAYLAFQELR (152 aa). 4 consecutive transmembrane segments (helical) span residues 25–45, 66–86, 104–124, and 145–165; these read ITRIFAGVFSLIVFSSLLTDG, CSIAVGAGLLAFLSSLAFLAL, LLDLILAVIWAGVWAVGFCFL, and AAITFSFFSILVWIFQAYLAF. The interval 191–226 is disordered; it reads SPPSAASPVNTPTTGPHGPSYASSSLSPYLSTPKAP. The span at 209–221 shows a compositional bias: low complexity; that stretch reads PSYASSSLSPYLS.

Belongs to the synaptogyrin family.

The protein localises to the membrane. The sequence is that of Synaptogyrin-4 (SYNGR4) from Bos taurus (Bovine).